Consider the following 412-residue polypeptide: MSSKGSVVLAYSGGLDTSCILVWLKEQGYDVIAYLANIGQKEDFEEARKKALKLGAKKVFIEDVSKEFVEEFIWPAVQSSALYEDRYLLGTSLARPCIARRQVEIAQREGAKYVSHGATGKGNDQVRFELTCYSLAPQIKVIAPWRMPEFYNRFKGRNDLMEYAKQHGIPIPVTPKSPWSMDENLMHISYEAGILENPKNQAPPGLYTKTQDPAKAPNSPDVLEIEFKKGVPVKVTNIKDGTTRTTSLELFMYLNEVAGKHGVGRIDIVENRFIGMKSRGIYETPAGTILYHAHLDIEAFTMDREVRKIKQGLGLKFAELVYTGFWHSPECEFVRHCIQKSQERVEGKVQVSVFKGQVYILGRESPLSLYNEELVSMNVQGDYEPIDATGFININSLRLKEYHRLQSKVTAK.

ATP-binding positions include 10–18 (AYSGGLDTS) and A36. Y87 and S92 together coordinate L-citrulline. Y87 carries the phosphotyrosine modification. At K112 the chain carries N6-acetyllysine. Position 113 is a phosphotyrosine (Y113). An ATP-binding site is contributed by 115–123 (SHGATGKGN). L-aspartate contacts are provided by T119, N123, and D124. Residue N123 coordinates L-citrulline. R127 contacts L-citrulline. An N6-acetyllysine; by CLOCK mark is found at K165 and K176. 2 positions are modified to phosphoserine: S177 and S180. Residues S180 and S189 each contribute to the L-citrulline site. A Phosphoserine modification is found at S219. Residues E270 and Y282 each contribute to the L-citrulline site.

This sequence belongs to the argininosuccinate synthase family. Type 1 subfamily. As to quaternary structure, homotetramer. Interacts with NMRAL1. Interacts with CLOCK; in a circadian manner. Forms tissue-specific complexes with ASL, SLC7A1, HSP90AA1 and nitric oxide synthase NOS1, NOS2 or NOS3; the complex regulates cell-autonomous L-arginine synthesis and citrulline recycling while channeling extracellular L-arginine to nitric oxide synthesis pathway. In terms of processing, acetylated by CLOCK in a circadian manner which negatively regulates its enzyme activity. Deacetylated by histone deacetylases. As to expression, widely expressed.

It is found in the cytoplasm. Its subcellular location is the cytosol. The catalysed reaction is L-citrulline + L-aspartate + ATP = 2-(N(omega)-L-arginino)succinate + AMP + diphosphate + H(+). The protein operates within amino-acid biosynthesis; L-arginine biosynthesis; L-arginine from L-ornithine and carbamoyl phosphate: step 2/3. It functions in the pathway nitrogen metabolism; urea cycle; (N(omega)-L-arginino)succinate from L-aspartate and L-citrulline: step 1/1. Functionally, one of the enzymes of the urea cycle, the metabolic pathway transforming neurotoxic amonia produced by protein catabolism into inocuous urea in the liver of ureotelic animals. Catalyzes the formation of arginosuccinate from aspartate, citrulline and ATP and together with ASL it is responsible for the biosynthesis of arginine in most body tissues. The chain is Argininosuccinate synthase from Mus musculus (Mouse).